A 576-amino-acid polypeptide reads, in one-letter code: Calcium-dependent protein kinase 11 (576 aa).

G2 carries N-myristoyl glycine lipidation. Residues 27 to 88 (PADAAPPALP…ANKAAPKVKR (62 aa)) form a disordered region. Residues 41 to 56 (APSDQAPEPVTIPPSE) show a composition bias toward low complexity. The 259-residue stretch at 113 to 371 (YTIGKKLGQG…AHEALCHPWV (259 aa)) folds into the Protein kinase domain. ATP is bound by residues 119 to 127 (LGQGQFGTT) and K142. The active-site Proton acceptor is the D237. An autoinhibitory domain region spans residues 377–407 (APDKPLDSAVLSRLKQFSAMNKLKKMALRVI). 4 EF-hand domains span residues 414–449 (EEIAGLKEMFKMLDTDNSGHITLEELKTGLQRVGAN), 450–485 (LMDSEIDALMEAADIDNSGTIDYGEFIAATLHINKV), 486–521 (EKEDKLFAAFSYFDKDGSGYITQDELQKACEEFGIG), and 522–555 (DTRIEDIIGDIDQDNDGRIDYNEFVEMMQKGNNA). Residues D427, D429, S431, H433, E438, D463, D465, S467, T469, E474, D499, D501, S503, Y505, E510, D533, D535, D537, R539, and E544 each contribute to the Ca(2+) site.

It belongs to the protein kinase superfamily. Ser/Thr protein kinase family. CDPK subfamily.

The protein resides in the membrane. The enzyme catalyses L-seryl-[protein] + ATP = O-phospho-L-seryl-[protein] + ADP + H(+). It carries out the reaction L-threonyl-[protein] + ATP = O-phospho-L-threonyl-[protein] + ADP + H(+). With respect to regulation, activated by calcium. Autophosphorylation may play an important role in the regulation of the kinase activity. In terms of biological role, may play a role in signal transduction pathways that involve calcium as a second messenger. This Oryza sativa subsp. japonica (Rice) protein is Calcium-dependent protein kinase 11.